Consider the following 147-residue polypeptide: MGVSLATRKYWPARTREGGCLRWEPVPAGQDLSCSLCDSLRVDMFLVVEPRRGLTRAGRGCECVRAGKRSLRGLARWPGAGAGGSAAFRACKTRHLLQREKCAVGRERRFCLWSGRHPKAPPGGRSRVRAHPGSDRVTAWLTGRRNS.

Its subcellular location is the host nucleus. The polypeptide is Protein MC014 (MC014) (Homo sapiens (Human)).